The chain runs to 887 residues: DNA gyrase subunit A (887 aa).

The Topo IIA-type catalytic domain maps to Leu-35–Leu-501. Tyr-123 functions as the O-(5'-phospho-DNA)-tyrosine intermediate in the catalytic mechanism. The short motif at Gln-528 to Gly-534 is the GyrA-box element. The disordered stretch occupies residues Lys-811–Arg-865. Acidic residues predominate over residues Asp-813–Gln-823.

It belongs to the type II topoisomerase GyrA/ParC subunit family. As to quaternary structure, heterotetramer, composed of two GyrA and two GyrB chains. In the heterotetramer, GyrA contains the active site tyrosine that forms a transient covalent intermediate with DNA, while GyrB binds cofactors and catalyzes ATP hydrolysis.

It is found in the cytoplasm. It catalyses the reaction ATP-dependent breakage, passage and rejoining of double-stranded DNA.. In terms of biological role, a type II topoisomerase that negatively supercoils closed circular double-stranded (ds) DNA in an ATP-dependent manner to modulate DNA topology and maintain chromosomes in an underwound state. Negative supercoiling favors strand separation, and DNA replication, transcription, recombination and repair, all of which involve strand separation. Also able to catalyze the interconversion of other topological isomers of dsDNA rings, including catenanes and knotted rings. Type II topoisomerases break and join 2 DNA strands simultaneously in an ATP-dependent manner. The protein is DNA gyrase subunit A of Staphylococcus aureus (strain MSSA476).